A 107-amino-acid chain; its full sequence is UPF0060 membrane protein RPD_3084 (107 aa).

Helical transmembrane passes span 5 to 25, 31 to 51, 59 to 79, and 85 to 105; these read IIYV…WGWL, VWWL…LTLV, AYAS…WSVE, and RWDV…LWGP.

The protein belongs to the UPF0060 family.

It localises to the cell inner membrane. The sequence is that of UPF0060 membrane protein RPD_3084 from Rhodopseudomonas palustris (strain BisB5).